A 1099-amino-acid polypeptide reads, in one-letter code: Mediator of RNA polymerase II transcription subunit 5 (1099 aa).

The segment at 41-66 (DNDDAKTQEGSGSQDKTDVEESISKP) is disordered.

This sequence belongs to the Mediator complex subunit 5 family. Component of the Mediator complex.

The protein localises to the nucleus. Functionally, component of the Mediator complex, a coactivator involved in the regulated transcription of nearly all RNA polymerase II-dependent genes. Mediator functions as a bridge to convey information from gene-specific regulatory proteins to the basal RNA polymerase II transcription machinery. Mediator is recruited to promoters by direct interactions with regulatory proteins and serves as a scaffold for the assembly of a functional preinitiation complex with RNA polymerase II and the general transcription factors. The polypeptide is Mediator of RNA polymerase II transcription subunit 5 (NUT1) (Candida glabrata (strain ATCC 2001 / BCRC 20586 / JCM 3761 / NBRC 0622 / NRRL Y-65 / CBS 138) (Yeast)).